Consider the following 131-residue polypeptide: uncharacterized protein (131 aa).

Residues 16 to 71 form a disordered region; sequence MSEQERDEVLEDDDDDEDNKSSQQERDEFVEDDDNNSIQSSPSCAQPLLTQYHDDG. Residues 20-33 are compositionally biased toward acidic residues; sequence ERDEVLEDDDDDED.

This is an uncharacterized protein from Dictyostelium discoideum (Social amoeba).